A 156-amino-acid chain; its full sequence is Peptidyl-prolyl cis-trans isomerase cypE (156 aa).

A PPIase cyclophilin-type domain is found at 2 to 155 (TEQTVTLQTT…DEIRIIKATA (154 aa)).

This sequence belongs to the cyclophilin-type PPIase family. As to quaternary structure, interacts with snwA.

Its subcellular location is the cytoplasm. The protein resides in the nucleus. It catalyses the reaction [protein]-peptidylproline (omega=180) = [protein]-peptidylproline (omega=0). Functionally, catalyzes the cis-trans isomerization of proline imidic peptide bonds in oligopeptides. Plays a role in protein folding, transport and assembly. This is Peptidyl-prolyl cis-trans isomerase cypE (cypE) from Dictyostelium discoideum (Social amoeba).